The primary structure comprises 525 residues: GMP synthase [glutamine-hydrolyzing] (525 aa).

The Glutamine amidotransferase type-1 domain maps to Arg-9–Leu-207. Cys-86 serves as the catalytic Nucleophile. Active-site residues include His-181 and Glu-183. In terms of domain architecture, GMPS ATP-PPase spans Trp-208 to Arg-400. An ATP-binding site is contributed by Ser-235–Ser-241.

In terms of assembly, homodimer.

The enzyme catalyses XMP + L-glutamine + ATP + H2O = GMP + L-glutamate + AMP + diphosphate + 2 H(+). Its pathway is purine metabolism; GMP biosynthesis; GMP from XMP (L-Gln route): step 1/1. Catalyzes the synthesis of GMP from XMP. The chain is GMP synthase [glutamine-hydrolyzing] from Shigella sonnei (strain Ss046).